An 84-amino-acid polypeptide reads, in one-letter code: M-zodatoxin-Lt2b (84 aa).

Residues 1–22 (MKYFVIALALAVALVCIAESTA) form the signal peptide. Positions 23-58 (YEVNEELENELDDLDDAAWLAVAEELQGLEDFEESR) are excised as a propeptide. A Processing quadruplet motif motif is present at residues 55–58 (EESR).

In terms of processing, cleavage of the propeptide depends on the processing quadruplet motif (XXXR, with at least one of X being E). As to expression, expressed by the venom gland.

It is found in the secreted. In terms of biological role, has antimicrobial activity against both Gram-positive and Gram-negative bacteria, and yeasts. Also has a strong hemolytic activity against rabbit erythrocytes. Causes paralysis, but is not lethal when injected into insect (M.domestica) larvae. The protein is M-zodatoxin-Lt2b of Lachesana tarabaevi (Spider).